Consider the following 391-residue polypeptide: uncharacterized protein (391 aa).

A helical transmembrane segment spans residues 4 to 24; the sequence is FALIVGIVALAIFSFLYIQLY.

The protein resides in the membrane. This is an uncharacterized protein from Haemophilus influenzae (strain ATCC 51907 / DSM 11121 / KW20 / Rd).